Consider the following 283-residue polypeptide: Energy-coupling factor transporter ATP-binding protein EcfA1 (283 aa).

In terms of domain architecture, ABC transporter spans 7 to 244 (VEFRHVSFTY…PELLQEIGLD (238 aa)). 41–48 (GHNGSGKS) contributes to the ATP binding site.

Belongs to the ABC transporter superfamily. Energy-coupling factor EcfA family. As to quaternary structure, forms a stable energy-coupling factor (ECF) transporter complex composed of 2 membrane-embedded substrate-binding proteins (S component), 2 ATP-binding proteins (A component) and 2 transmembrane proteins (T component).

It is found in the cell membrane. In terms of biological role, ATP-binding (A) component of a common energy-coupling factor (ECF) ABC-transporter complex. Unlike classic ABC transporters this ECF transporter provides the energy necessary to transport a number of different substrates. The chain is Energy-coupling factor transporter ATP-binding protein EcfA1 from Lactobacillus acidophilus (strain ATCC 700396 / NCK56 / N2 / NCFM).